Here is a 296-residue protein sequence, read N- to C-terminus: 4-hydroxybenzoate octaprenyltransferase (296 aa).

8 helical membrane-spanning segments follow: residues 28 to 48, 51 to 71, 102 to 122, 143 to 163, 174 to 194, 212 to 232, 233 to 253, and 274 to 294; these read IGTL…SDGI, LAVL…GCVI, LLLT…LNHL, FFPI…PMAF, AWIL…VYAM, FGRY…LLMA, VLGA…IVLL, and FLAN…HTFF.

The protein belongs to the UbiA prenyltransferase family. The cofactor is Mg(2+).

The protein localises to the cell inner membrane. The catalysed reaction is all-trans-octaprenyl diphosphate + 4-hydroxybenzoate = 4-hydroxy-3-(all-trans-octaprenyl)benzoate + diphosphate. The protein operates within cofactor biosynthesis; ubiquinone biosynthesis. Catalyzes the prenylation of para-hydroxybenzoate (PHB) with an all-trans polyprenyl group. Mediates the second step in the final reaction sequence of ubiquinone-8 (UQ-8) biosynthesis, which is the condensation of the polyisoprenoid side chain with PHB, generating the first membrane-bound Q intermediate 3-octaprenyl-4-hydroxybenzoate. The chain is 4-hydroxybenzoate octaprenyltransferase from Neisseria meningitidis serogroup C (strain 053442).